Consider the following 212-residue polypeptide: Ribosomal RNA large subunit methyltransferase E (212 aa).

Residues 1–10 (MATCRRRRRG) show a composition bias toward basic residues. Residues 1 to 24 (MATCRRRRRGCNSQARRSRHESDP) form a disordered region. S-adenosyl-L-methionine-binding residues include Gly66, Trp68, Asp86, Asp102, and Asp127. The active-site Proton acceptor is Lys167.

The protein belongs to the class I-like SAM-binding methyltransferase superfamily. RNA methyltransferase RlmE family.

The protein resides in the cytoplasm. It catalyses the reaction uridine(2552) in 23S rRNA + S-adenosyl-L-methionine = 2'-O-methyluridine(2552) in 23S rRNA + S-adenosyl-L-homocysteine + H(+). In terms of biological role, specifically methylates the uridine in position 2552 of 23S rRNA at the 2'-O position of the ribose in the fully assembled 50S ribosomal subunit. The polypeptide is Ribosomal RNA large subunit methyltransferase E (Halorhodospira halophila (strain DSM 244 / SL1) (Ectothiorhodospira halophila (strain DSM 244 / SL1))).